Reading from the N-terminus, the 327-residue chain is tRNA N6-adenosine threonylcarbamoyltransferase (327 aa).

Residues His109 and His113 each contribute to the Fe cation site. Substrate contacts are provided by residues Met132–Gly136, Asp165, Gly178, Asp182, and Asn268. Asp296 serves as a coordination point for Fe cation.

Belongs to the KAE1 / TsaD family. In terms of assembly, forms a hexamer composed of two TsaB, TsaD and TsaE trimers. It depends on Fe(2+) as a cofactor.

It is found in the cytoplasm. It carries out the reaction L-threonylcarbamoyladenylate + adenosine(37) in tRNA = N(6)-L-threonylcarbamoyladenosine(37) in tRNA + AMP + H(+). Required for the formation of a threonylcarbamoyl group on adenosine at position 37 (t(6)A37) in tRNAs that read codons beginning with adenine. Is involved in the transfer of the threonylcarbamoyl moiety of threonylcarbamoyl-AMP (TC-AMP) to the N6 group of A37, together with TsaE and TsaB. TsaD likely plays a direct catalytic role in this reaction. This is tRNA N6-adenosine threonylcarbamoyltransferase from Thermotoga maritima (strain ATCC 43589 / DSM 3109 / JCM 10099 / NBRC 100826 / MSB8).